Reading from the N-terminus, the 123-residue chain is Ribosome-binding factor A (123 aa).

Belongs to the RbfA family. In terms of assembly, monomer. Binds 30S ribosomal subunits, but not 50S ribosomal subunits or 70S ribosomes.

It localises to the cytoplasm. In terms of biological role, one of several proteins that assist in the late maturation steps of the functional core of the 30S ribosomal subunit. Associates with free 30S ribosomal subunits (but not with 30S subunits that are part of 70S ribosomes or polysomes). Required for efficient processing of 16S rRNA. May interact with the 5'-terminal helix region of 16S rRNA. The sequence is that of Ribosome-binding factor A from Geotalea daltonii (strain DSM 22248 / JCM 15807 / FRC-32) (Geobacter daltonii).